Here is a 544-residue protein sequence, read N- to C-terminus: Dihydrolipoyllysine-residue acetyltransferase component of pyruvate dehydrogenase complex (544 aa).

2 consecutive Lipoyl-binding domains span residues 1–76 (MYEF…VTID) and 113–188 (IYDF…VLIG). Residues K42 and K154 each carry the N6-lipoyllysine modification. Residues 242 to 279 (LASPVARKLASDLGVDIATIKGSGEQGRVMKDDVQNSK) form the Peripheral subunit-binding (PSBD) domain. Residue H516 is part of the active site.

The protein belongs to the 2-oxoacid dehydrogenase family. Forms a 24-polypeptide structural core with octahedral symmetry. The cofactor is (R)-lipoate.

The catalysed reaction is N(6)-[(R)-dihydrolipoyl]-L-lysyl-[protein] + acetyl-CoA = N(6)-[(R)-S(8)-acetyldihydrolipoyl]-L-lysyl-[protein] + CoA. Its function is as follows. The pyruvate dehydrogenase complex catalyzes the overall conversion of pyruvate to acetyl-CoA and CO(2). It contains multiple copies of three enzymatic components: pyruvate dehydrogenase (E1), dihydrolipoamide acetyltransferase (E2) and lipoamide dehydrogenase (E3). This chain is Dihydrolipoyllysine-residue acetyltransferase component of pyruvate dehydrogenase complex (pdhC), found in Acholeplasma laidlawii.